The chain runs to 215 residues: tRNA (guanine-N(7)-)-methyltransferase (215 aa).

Residues glutamate 44, glutamate 69, aspartate 96, and aspartate 118 each coordinate S-adenosyl-L-methionine. The active site involves aspartate 118. Residue lysine 122 participates in substrate binding. Residues 124-129 (RHEKRR) form an interaction with RNA region. Substrate contacts are provided by residues aspartate 154 and 192–195 (TEYE).

Belongs to the class I-like SAM-binding methyltransferase superfamily. TrmB family.

It carries out the reaction guanosine(46) in tRNA + S-adenosyl-L-methionine = N(7)-methylguanosine(46) in tRNA + S-adenosyl-L-homocysteine. Its pathway is tRNA modification; N(7)-methylguanine-tRNA biosynthesis. In terms of biological role, catalyzes the formation of N(7)-methylguanine at position 46 (m7G46) in tRNA. This Limosilactobacillus fermentum (strain NBRC 3956 / LMG 18251) (Lactobacillus fermentum) protein is tRNA (guanine-N(7)-)-methyltransferase.